Reading from the N-terminus, the 2766-residue chain is PDZ domain-containing protein 2 (2766 aa).

The PDZ 1 domain occupies 85–177 (LSFGNIPVFG…GGFIYLIMLR (93 aa)). Disordered stretches follow at residues 189-315 (GNSG…KTGK) and 419-452 (MPGS…KLKS). The segment covering 242–254 (TADDPNSELENGA) has biased composition (acidic residues). The segment covering 280–296 (HLERSEADSEVELRVPK) has biased composition (basic and acidic residues). Residues 334–419 (KMELLKESDG…MVQLVVASKM (86 aa)) enclose the PDZ 2 domain. Ser517 bears the Phosphoserine mark. One can recognise a PDZ 3 domain in the interval 535-621 (IIGLYKEKGK…GLFVLTVRTK (87 aa)). Polar residues predominate over residues 627-636 (LTPCSTPTHM). The tract at residues 627–673 (LTPCSTPTHMSRSSSPSFNTNSGGTPAGGGQEEGGSSSLGRKAPGPK) is disordered. The segment covering 637-650 (SRSSSPSFNTNSGG) has biased composition (low complexity). In terms of domain architecture, PDZ 4 spans 679 to 764 (EVTLNKEPRV…GPVRLVIGRH (86 aa)). The span at 783–794 (YQESREANSSPG) shows a compositional bias: polar residues. 2 disordered regions span residues 783–803 (YQES…KSPS) and 834–853 (AGSE…EDGS). Ser891 and Ser895 each carry phosphoserine. Disordered regions lie at residues 915–966 (NGGS…KQEE), 990–1425 (HSIL…PSVL), 1456–1531 (ISLS…CPGT), 1725–1909 (DSQG…LPEQ), 1924–1967 (DTSC…IRQS), 2015–2070 (ERVP…ASQV), 2146–2174 (FSSH…AMGG), 2262–2397 (DRPT…ERRT), 2424–2450 (QLEI…GHAD), and 2465–2496 (TRAY…WATP). A compositionally biased stretch (acidic residues) spans 918–927 (SDDEDFDGEG). The segment covering 1021–1038 (GRKEMSGSRSSPKLEYRV) has biased composition (basic and acidic residues). Composition is skewed to polar residues over residues 1040–1061 (TDTQ…SENL), 1126–1137 (PGDSSVPTNCGP), and 1189–1220 (SETP…SQGI). Composition is skewed to low complexity over residues 1379 to 1393 (SQPP…SHHA) and 1456 to 1471 (ISLS…SPSS). Ser1767 bears the Phosphoserine mark. Basic residues predominate over residues 1797-1806 (CSPKLKRLNS). Positions 1884–1901 (LRTSASDTSIRTFTSPLT) are enriched in polar residues. Composition is skewed to low complexity over residues 1924–1937 (DTSC…PRSG) and 1947–1963 (SGSA…ALAG). Composition is skewed to low complexity over residues 2280 to 2296 (PPIN…GSPS) and 2305 to 2321 (RSLS…SSLL). 2 stretches are compositionally biased toward polar residues: residues 2322–2347 (PQMT…SNKG) and 2362–2372 (PTSTVSPASPS). Residues 2550-2634 (FIVLNKKEGS…HKHALMIIKK (85 aa)) enclose the PDZ 5 domain. Positions 2635–2667 (GNDQPGPSFKQEPPSANGKGPFPRRTLPLEPGA) are disordered. Residues 2678 to 2763 (CVEVLKTSAG…GPVQLVIRKH (86 aa)) enclose the PDZ 6 domain.

In terms of assembly, interacts with SCN10A, CTNND2 and PKP4. Post-translationally, a secreted form is produced by caspase-mediated proteolytic cleavage. As to expression, expressed in the heart, liver, brain, spleen, lung, kidney, testis and skeletal muscle.

The protein resides in the nucleus. It is found in the cytoplasm. Its subcellular location is the endoplasmic reticulum. It localises to the cell junction. The protein localises to the secreted. The protein is PDZ domain-containing protein 2 (Pdzd2) of Rattus norvegicus (Rat).